Here is a 665-residue protein sequence, read N- to C-terminus: Glycine--tRNA ligase beta subunit (665 aa).

Belongs to the class-II aminoacyl-tRNA synthetase family. Tetramer of two alpha and two beta subunits.

Its subcellular location is the cytoplasm. The enzyme catalyses tRNA(Gly) + glycine + ATP = glycyl-tRNA(Gly) + AMP + diphosphate. In Rickettsia prowazekii (strain Madrid E), this protein is Glycine--tRNA ligase beta subunit (glyS).